A 1757-amino-acid polypeptide reads, in one-letter code: 1-phosphatidylinositol-3-phosphate 5-kinase FAB1A (1757 aa).

The FYVE-type zinc finger occupies 36–102; the sequence is DQSCPVCYEC…VCNYCYKQWE (67 aa). Zn(2+)-binding residues include C42, C45, C58, C61, C66, C69, C94, and C97. Disordered regions lie at residues 125–193, 276–297, 313–346, and 684–709; these read ARSV…SDNQ, KTRQ…CEES, LPPE…YLRP, and AEKS…NFTS. The segment covering 134–145 has biased composition (polar residues); sequence NSSNCTIDSTAG. The segment covering 317-337 has biased composition (acidic residues); that stretch reads PENEEDEREAVLSDDDGDEGD. Positions 1014–1087 form a coiled coil; it reads LQKESKEVIK…LQQMLNVVKD (74 aa). The PIPK domain occupies 1395–1719; sequence SFSLFDSVNL…RFRKAMTAYF (325 aa). The segment covering 1729–1739 has biased composition (low complexity); sequence AAVVPSNSSSA. A disordered region spans residues 1729-1757; it reads AAVVPSNSSSAEVKEEEEKDNPQAVGNKS.

Component of the PI(3,5)P2 regulatory complex at least composed of ATG18, SAC/FIG4, FAB1 and VAC14. Requires Mg(2+) as cofactor. Mn(2+) is required as a cofactor. In terms of tissue distribution, ubiquitous with highest expression levels in pollen, seed, and senescent leaves.

The protein localises to the endosome membrane. It catalyses the reaction a 1,2-diacyl-sn-glycero-3-phospho-(1D-myo-inositol-3-phosphate) + ATP = a 1,2-diacyl-sn-glycero-3-phospho-(1D-myo-inositol-3,5-bisphosphate) + ADP + H(+). The PI(3,5)P2 regulatory complex regulates both the synthesis and turnover of phosphatidylinositol 3,5-bisphosphate (PtdIns(3,5)P2). Catalyzes the phosphorylation of phosphatidylinositol 3-phosphate on the fifth hydroxyl of the myo-inositol ring, to form phosphatidylinositol 3,5-bisphosphate. Plays an important role in maintenance of endomembrane homeostasis including endocytosis, vacuole formation, and vacuolar acidification processes. Required for development of viable pollen. Might mediate recycling of auxin transporters. This chain is 1-phosphatidylinositol-3-phosphate 5-kinase FAB1A (FAB1A), found in Arabidopsis thaliana (Mouse-ear cress).